A 111-amino-acid polypeptide reads, in one-letter code: Probable 4-amino-4-deoxy-L-arabinose-phosphoundecaprenol flippase subunit ArnE (111 aa).

Over Met-1 to Ala-37 the chain is Cytoplasmic. Residues Leu-38 to Leu-58 form a helical membrane-spanning segment. The EamA domain maps to Leu-40–Ser-109. Residues Gln-59–Asn-60 lie on the Periplasmic side of the membrane. A helical membrane pass occupies residues Val-61 to Ala-81. The Cytoplasmic segment spans residues Val-82 to Glu-87. Residues Pro-88 to Gly-108 traverse the membrane as a helical segment. Residues Ser-109–Val-111 lie on the Periplasmic side of the membrane.

This sequence belongs to the ArnE family. In terms of assembly, heterodimer of ArnE and ArnF.

The protein localises to the cell inner membrane. The protein operates within bacterial outer membrane biogenesis; lipopolysaccharide biosynthesis. Functionally, translocates 4-amino-4-deoxy-L-arabinose-phosphoundecaprenol (alpha-L-Ara4N-phosphoundecaprenol) from the cytoplasmic to the periplasmic side of the inner membrane. The polypeptide is Probable 4-amino-4-deoxy-L-arabinose-phosphoundecaprenol flippase subunit ArnE (Escherichia coli (strain 55989 / EAEC)).